Here is a 492-residue protein sequence, read N- to C-terminus: Cysteine--tRNA ligase (492 aa).

A Zn(2+)-binding site is contributed by Cys35. Positions Pro37 to Asn47 match the 'HIGH' region motif. Residues Cys230, His255, and Glu259 each coordinate Zn(2+). The 'KMSKS' region signature appears at Lys287–Ser291. ATP is bound at residue Lys290.

This sequence belongs to the class-I aminoacyl-tRNA synthetase family. Monomer. Requires Zn(2+) as cofactor.

It is found in the cytoplasm. It catalyses the reaction tRNA(Cys) + L-cysteine + ATP = L-cysteinyl-tRNA(Cys) + AMP + diphosphate. This Flavobacterium johnsoniae (strain ATCC 17061 / DSM 2064 / JCM 8514 / BCRC 14874 / CCUG 350202 / NBRC 14942 / NCIMB 11054 / UW101) (Cytophaga johnsonae) protein is Cysteine--tRNA ligase.